The primary structure comprises 271 residues: Shikimate dehydrogenase (NADP(+)) (271 aa).

Shikimate is bound by residues 14-16 and threonine 61; that span reads SQS. Residue lysine 65 is the Proton acceptor of the active site. 2 residues coordinate shikimate: asparagine 86 and aspartate 101. NADP(+) contacts are provided by residues 125–129, 148–153, and methionine 212; these read GAGGA and NRTHAR. Tyrosine 214 lines the shikimate pocket. Glycine 236 serves as a coordination point for NADP(+).

The protein belongs to the shikimate dehydrogenase family. In terms of assembly, homodimer.

The catalysed reaction is shikimate + NADP(+) = 3-dehydroshikimate + NADPH + H(+). It participates in metabolic intermediate biosynthesis; chorismate biosynthesis; chorismate from D-erythrose 4-phosphate and phosphoenolpyruvate: step 4/7. Involved in the biosynthesis of the chorismate, which leads to the biosynthesis of aromatic amino acids. Catalyzes the reversible NADPH linked reduction of 3-dehydroshikimate (DHSA) to yield shikimate (SA). This chain is Shikimate dehydrogenase (NADP(+)), found in Edwardsiella ictaluri (strain 93-146).